The primary structure comprises 503 residues: uncharacterized protein (503 aa).

The stretch at 437–465 (LNKDLILENLIETENENDKQEFQKLLRTI) forms a coiled coil.

It belongs to the IIV-6 467R family.

This is an uncharacterized protein from Invertebrate iridescent virus 6 (IIV-6).